Reading from the N-terminus, the 171-residue chain is 2-vinyl bacteriochlorophyllide hydratase (171 aa).

Its pathway is porphyrin-containing compound metabolism; bacteriochlorophyll biosynthesis (light-independent). The protein is 2-vinyl bacteriochlorophyllide hydratase (bchF) of Rhodobacter capsulatus (strain ATCC BAA-309 / NBRC 16581 / SB1003).